The following is a 250-amino-acid chain: 3-deoxy-manno-octulosonate cytidylyltransferase (250 aa).

Belongs to the KdsB family.

It is found in the cytoplasm. It carries out the reaction 3-deoxy-alpha-D-manno-oct-2-ulosonate + CTP = CMP-3-deoxy-beta-D-manno-octulosonate + diphosphate. It participates in nucleotide-sugar biosynthesis; CMP-3-deoxy-D-manno-octulosonate biosynthesis; CMP-3-deoxy-D-manno-octulosonate from 3-deoxy-D-manno-octulosonate and CTP: step 1/1. The protein operates within bacterial outer membrane biogenesis; lipopolysaccharide biosynthesis. In terms of biological role, activates KDO (a required 8-carbon sugar) for incorporation into bacterial lipopolysaccharide in Gram-negative bacteria. The polypeptide is 3-deoxy-manno-octulosonate cytidylyltransferase (Geobacter sulfurreducens (strain ATCC 51573 / DSM 12127 / PCA)).